The chain runs to 506 residues: Putative transporter SVOPL (506 aa).

10 helical membrane passes run 57 to 77 (SIGFGCFHILLFVIMGSANIV), 104 to 124 (ALVSTMVFFGFMVCGVLCGYI), 133 to 153 (VVFGGFVWASYFSFLTSFSTS), 190 to 210 (LLPLASIFWMMGSILIIVLGM), 220 to 240 (WMIRFSVIPSLVLIGLFMFIP), 297 to 317 (TSLLLWYSWFVASFSYYGSVL), 362 to 382 (LISCLGEVALIPLNIILLNIV), 397 to 417 (FFFMLVNICTTMLGFTILLFL), 444 to 464 (IGMGFCTSFSRIGGMIAPFIA), and 472 to 492 (VILALSPFATACIICAIGVFF).

Belongs to the major facilitator superfamily.

The protein localises to the membrane. This Danio rerio (Zebrafish) protein is Putative transporter SVOPL (svopl).